A 571-amino-acid polypeptide reads, in one-letter code: Proline--tRNA ligase (571 aa).

The protein belongs to the class-II aminoacyl-tRNA synthetase family. ProS type 1 subfamily. As to quaternary structure, homodimer.

It localises to the cytoplasm. The enzyme catalyses tRNA(Pro) + L-proline + ATP = L-prolyl-tRNA(Pro) + AMP + diphosphate. Catalyzes the attachment of proline to tRNA(Pro) in a two-step reaction: proline is first activated by ATP to form Pro-AMP and then transferred to the acceptor end of tRNA(Pro). As ProRS can inadvertently accommodate and process non-cognate amino acids such as alanine and cysteine, to avoid such errors it has two additional distinct editing activities against alanine. One activity is designated as 'pretransfer' editing and involves the tRNA(Pro)-independent hydrolysis of activated Ala-AMP. The other activity is designated 'posttransfer' editing and involves deacylation of mischarged Ala-tRNA(Pro). The misacylated Cys-tRNA(Pro) is not edited by ProRS. The chain is Proline--tRNA ligase from Proteus mirabilis (strain HI4320).